Here is a 218-residue protein sequence, read N- to C-terminus: tRNA (cytidine(56)-2'-O)-methyltransferase (218 aa).

Residues Leu-81, 106 to 110 (GAEKV), and 124 to 131 (IGNQPHSE) contribute to the S-adenosyl-L-methionine site. The segment at 170–218 (KVGEEGPSGGAPGVRAERGRGGRGEGVQGADEVRGHKRGATDRDLGDET) is disordered. A compositionally biased stretch (basic and acidic residues) spans 200 to 218 (DEVRGHKRGATDRDLGDET).

This sequence belongs to the aTrm56 family. In terms of assembly, homodimer.

It localises to the cytoplasm. It carries out the reaction cytidine(56) in tRNA + S-adenosyl-L-methionine = 2'-O-methylcytidine(56) in tRNA + S-adenosyl-L-homocysteine + H(+). Its function is as follows. Specifically catalyzes the AdoMet-dependent 2'-O-ribose methylation of cytidine at position 56 in tRNAs. This is tRNA (cytidine(56)-2'-O)-methyltransferase from Ignicoccus hospitalis (strain KIN4/I / DSM 18386 / JCM 14125).